A 236-amino-acid polypeptide reads, in one-letter code: Small ribosomal subunit protein uS2c (236 aa).

This sequence belongs to the universal ribosomal protein uS2 family.

The protein localises to the plastid. It localises to the chloroplast. The protein is Small ribosomal subunit protein uS2c (rps2) of Olimarabidopsis pumila (Dwarf rocket).